The sequence spans 863 residues: Importin subunit beta-1 (863 aa).

HEAT repeat units lie at residues 2–31 (NAGE…AART), 33–62 (FAQY…LALK), 85–124 (VEIK…ELAT), 129–159 (DLMV…YICE), 170–201 (SNAI…LYDS), 212–248 (EYER…MHLY), 253–299 (PFYM…EIQE), 314–360 (FARA…QVVG), 364–392 (VNPV…AFGS), 399–439 (VAML…SSFV), 449–481 (LSPM…VCHF), 496–530 (YEAI…LITF), 536–586 (LPMI…IIRR), 592–630 (RTSS…MNSL), 635–671 (EVYV…LARA), 677–715 (LPYC…ALAI), 720–767 (QTYL…ITQA), 778–815 (QPYV…LAES), and 822–861 (KSYF…KRQA). The Importin N-terminal domain maps to 21–101 (AEKQLENAAR…KSLALQTLGS (81 aa)).

Belongs to the importin beta family. Importin beta-1 subfamily. In terms of assembly, forms a complex with an importin alpha subunit. Interacts with Ran; interacts specifically with the GTP-bound form of Ran (GTP-Ran), protecting it from GTP hydrolysis and nucleotide exchange. Interacts with nucleoporins.

It localises to the cytoplasm. The protein localises to the nucleus envelope. The protein resides in the nucleus. Its subcellular location is the nuclear pore complex. In terms of biological role, importin beta subunit that functions in nuclear protein import through association with the importin alpha subunit, which binds to the clasical nuclear localization signal (cNLS) in cargo substrates. Docking of the importin/substrate complex to the nuclear pore complex (NPC) is mediated by importin beta through binding to nucleoporin FxFG repeats and the complex is subsequently translocated through the pore by an energy requiring, Ran-dependent mechanism. At the nucleoplasmic side of the NPC, GTP-Ran binds to importin beta and the three components separate, leading to release of the cargo. Importin alpha and beta are re-exported from the nucleus to the cytoplasm where GTP hydrolysis releases Ran from importin beta. The directionality of nuclear import is thought to be conferred by an asymmetric distribution of the GTP- and GDP-bound forms of Ran between the cytoplasm and nucleus. This Schizosaccharomyces pombe (strain 972 / ATCC 24843) (Fission yeast) protein is Importin subunit beta-1.